We begin with the raw amino-acid sequence, 146 residues long: UPF0178 protein R01393 (146 aa).

Belongs to the UPF0178 family.

In Rhizobium meliloti (strain 1021) (Ensifer meliloti), this protein is UPF0178 protein R01393.